The following is a 246-amino-acid chain: Small ribosomal subunit protein uS2 (246 aa).

Belongs to the universal ribosomal protein uS2 family.

This Burkholderia thailandensis (strain ATCC 700388 / DSM 13276 / CCUG 48851 / CIP 106301 / E264) protein is Small ribosomal subunit protein uS2.